Here is a 272-residue protein sequence, read N- to C-terminus: Phosphatidylglycerol--prolipoprotein diacylglyceryl transferase (272 aa).

Helical transmembrane passes span 17-37 (LAIR…LGFG), 59-79 (MLFF…VLFY), 95-115 (WEGG…MWLF), 129-149 (FIAP…FING), 176-196 (SQLY…WLFA), 202-222 (MGAV…AAEF), and 237-257 (LSMG…MVVW). R142 contributes to the a 1,2-diacyl-sn-glycero-3-phospho-(1'-sn-glycerol) binding site.

This sequence belongs to the Lgt family.

Its subcellular location is the cell inner membrane. The enzyme catalyses L-cysteinyl-[prolipoprotein] + a 1,2-diacyl-sn-glycero-3-phospho-(1'-sn-glycerol) = an S-1,2-diacyl-sn-glyceryl-L-cysteinyl-[prolipoprotein] + sn-glycerol 1-phosphate + H(+). The protein operates within protein modification; lipoprotein biosynthesis (diacylglyceryl transfer). In terms of biological role, catalyzes the transfer of the diacylglyceryl group from phosphatidylglycerol to the sulfhydryl group of the N-terminal cysteine of a prolipoprotein, the first step in the formation of mature lipoproteins. The chain is Phosphatidylglycerol--prolipoprotein diacylglyceryl transferase from Cupriavidus necator (strain ATCC 17699 / DSM 428 / KCTC 22496 / NCIMB 10442 / H16 / Stanier 337) (Ralstonia eutropha).